Consider the following 488-residue polypeptide: Malonate-semialdehyde dehydrogenase (488 aa).

Residues A150, F152, K176, E179, R180, S229, and T251 each contribute to the NAD(+) site. The active-site Nucleophile is C284. Residue E382 coordinates NAD(+).

The protein belongs to the aldehyde dehydrogenase family. IolA subfamily. In terms of assembly, homotetramer.

The enzyme catalyses 3-oxopropanoate + NAD(+) + CoA + H2O = hydrogencarbonate + acetyl-CoA + NADH + H(+). It carries out the reaction 2-methyl-3-oxopropanoate + NAD(+) + CoA + H2O = propanoyl-CoA + hydrogencarbonate + NADH + H(+). The protein operates within polyol metabolism; myo-inositol degradation into acetyl-CoA; acetyl-CoA from myo-inositol: step 7/7. Catalyzes the oxidation of malonate semialdehyde (MSA) and methylmalonate semialdehyde (MMSA) into acetyl-CoA and propanoyl-CoA, respectively. Is involved in a myo-inositol catabolic pathway. Bicarbonate, and not CO2, is the end-product of the enzymatic reaction. The polypeptide is Malonate-semialdehyde dehydrogenase (Listeria monocytogenes serotype 4a (strain HCC23)).